Reading from the N-terminus, the 208-residue chain is V-type ATP synthase subunit E (208 aa).

The protein belongs to the V-ATPase E subunit family.

Functionally, produces ATP from ADP in the presence of a proton gradient across the membrane. The protein is V-type ATP synthase subunit E of Chlamydia trachomatis serovar A (strain ATCC VR-571B / DSM 19440 / HAR-13).